The primary structure comprises 428 residues: Gamma-glutamyl phosphate reductase (428 aa).

This sequence belongs to the gamma-glutamyl phosphate reductase family.

Its subcellular location is the cytoplasm. It catalyses the reaction L-glutamate 5-semialdehyde + phosphate + NADP(+) = L-glutamyl 5-phosphate + NADPH + H(+). It participates in amino-acid biosynthesis; L-proline biosynthesis; L-glutamate 5-semialdehyde from L-glutamate: step 2/2. In terms of biological role, catalyzes the NADPH-dependent reduction of L-glutamate 5-phosphate into L-glutamate 5-semialdehyde and phosphate. The product spontaneously undergoes cyclization to form 1-pyrroline-5-carboxylate. This is Gamma-glutamyl phosphate reductase from Treponema pallidum (strain Nichols).